A 129-amino-acid chain; its full sequence is Small ribosomal subunit protein uS11 (129 aa).

The protein belongs to the universal ribosomal protein uS11 family. In terms of assembly, part of the 30S ribosomal subunit. Interacts with proteins S7 and S18. Binds to IF-3.

Located on the platform of the 30S subunit, it bridges several disparate RNA helices of the 16S rRNA. Forms part of the Shine-Dalgarno cleft in the 70S ribosome. This is Small ribosomal subunit protein uS11 from Caulobacter vibrioides (strain ATCC 19089 / CIP 103742 / CB 15) (Caulobacter crescentus).